Here is a 397-residue protein sequence, read N- to C-terminus: P2X purinoceptor 3 (397 aa).

Residues 1 to 20 lie on the Cytoplasmic side of the membrane; the sequence is MNCISDFFTYETTKSVVVKS. The chain crosses the membrane as a helical span at residues 21–43; it reads WTIGIINRAVQLLIISYFVGWVF. Topologically, residues 44-322 are extracellular; that stretch reads LHEKAYQVRD…AGKFNIIPTI (279 aa). K63 and K65 together coordinate ATP. 3 disulfides stabilise this stretch: C107/C153, C116/C137, and C122/C147. Residue E111 participates in Mg(2+) binding. N139 carries an N-linked (GlcNAc...) asparagine glycan. Position 158 (D158) interacts with Mg(2+). Position 158 (D158) interacts with Ca(2+). A glycan (N-linked (GlcNAc...) asparagine) is linked at N170. Residue T172 coordinates ATP. N194 carries N-linked (GlcNAc...) asparagine glycosylation. Cystine bridges form between C203/C213 and C247/C256. ATP contacts are provided by S275, N279, and R281. N-linked (GlcNAc...) asparagine glycosylation is present at N290. An ATP-binding site is contributed by K299. A helical membrane pass occupies residues 323-341; the sequence is ISSVAAFTSVGVGTVLCDI. The Cytoplasmic portion of the chain corresponds to 342–397; it reads ILLNFLKGADHYKARKFEEVTETTLKGTASTNPVFTSDQATVEKQSTDSGAYSIGH.

The protein belongs to the P2X receptor family. Homotrimer. Forms heterotrimer with P2RX2. Heterotrimeric P2RX2/3 has a ligand dose-response profile that is distinct from either homotrimeric P2RX2 or P2RX3.

The protein resides in the cell membrane. It carries out the reaction Ca(2+)(in) = Ca(2+)(out). The enzyme catalyses Na(+)(in) = Na(+)(out). With respect to regulation, has high sensitivity to ATP. Fast activation by external ATP. Exhibits rapid desensitization. Sensitives to the ATP agonist:alpha/beta-methylene-ATP. Subject to allosteric inhibition by AF-219. Mg(2+) and Ca(2+) slow deactivation of P2RX3. In terms of biological role, extracellular ATP-activated non-selective cation channel. Plays particularly important role in sensory neurons where its activation is critical for gustatory, nociceptive responses, visceral reflexes and sensory hypersensitization. This Mus musculus (Mouse) protein is P2X purinoceptor 3 (P2rx3).